The following is a 182-amino-acid chain: Protein LIGHT-DEPENDENT SHORT HYPOCOTYLS 5 (182 aa).

Over residues methionine 1–serine 16 the composition is skewed to low complexity. 2 disordered regions span residues methionine 1–serine 22 and alanine 138–glycine 168. Positions arginine 19–lysine 147 constitute an ALOG domain. A Nuclear localization signal motif is present at residues lysine 145 to lysine 149.

It belongs to the plant homeotic and developmental regulators ALOG protein family.

It is found in the nucleus. In terms of biological role, probable transcription regulator that acts as a developmental regulator by promoting cell growth in response to light. This is Protein LIGHT-DEPENDENT SHORT HYPOCOTYLS 5 (LSH5) from Arabidopsis thaliana (Mouse-ear cress).